Here is a 540-residue protein sequence, read N- to C-terminus: Hexose transporter HXT14 (540 aa).

Over 1–56 (MTAQIPYQHSSGYISHFHNNELDAGRGRDYNVTIKYLDDKEENIEGQAAKISHNAS) the chain is Cytoplasmic. The helical transmembrane segment at 57–76 (LHIPVLLCLVISLGGFIFGW) threads the bilayer. The Extracellular portion of the chain corresponds to 77–119 (DIGTIGGMTNMVSFQEKFGTTNIIHDDETIFVSTKKLTDLQIG). The chain crosses the membrane as a helical span at residues 120-140 (LIISIFNISCGVGALTLSKIG). The Cytoplasmic portion of the chain corresponds to 141-146 (DWIGRK). A helical transmembrane segment spans residues 147–167 (GGIWFALVVYCIGITIQILSY). Residues 168–177 (GRWYFLTLGR) lie on the Extracellular side of the membrane. A helical membrane pass occupies residues 178 to 198 (AVTGIGVGVTTVLVPMFLSEN). Topologically, residues 199-204 (SPLKIR) are cytoplasmic. The helical transmembrane segment at 205-225 (GSMVSTYQLIVTFGILMGNIL) threads the bilayer. Residues 226–243 (NFICERCYKDPTQNIAWQ) are Extracellular-facing. A helical membrane pass occupies residues 244–264 (LPLFLGYIWAIIIGMSLVYVP). The Cytoplasmic portion of the chain corresponds to 265–357 (ESPQYLAKIK…IMAFQQLSGI (93 aa)). The chain crosses the membrane as a helical span at residues 358 to 374 (NYFFYYGTSVFKGVGIK). Residues 375 to 380 (DPYITS) are Extracellular-facing. The helical transmembrane segment at 381 to 398 (IILSSVNFLSTILGIYYV) threads the bilayer. Over 399–405 (EKWGHKT) the chain is Cytoplasmic. The helical transmembrane segment at 406 to 426 (CLLYGSTNLLFYMMTYATVGT) threads the bilayer. Residues 427-440 (FGRETDFSNIVLII) are Extracellular-facing. The chain crosses the membrane as a helical span at residues 441–461 (VTCCFIFWFAITLGPVTFVLV). Residues 462–478 (SELFPLRTRAISMAICT) are Cytoplasmic-facing. Residues 479–499 (FINWMFNFLISLLTPMIVSKI) form a helical membrane-spanning segment. Asp500 is a topological domain (extracellular). The helical transmembrane segment at 501–521 (FKLGYIFAACLLALIIFSWIL) threads the bilayer. At 522 to 540 (VPETRKKNEQEINKIFEPE) the chain is on the cytoplasmic side.

It belongs to the major facilitator superfamily. Sugar transporter (TC 2.A.1.1) family.

The protein localises to the membrane. Its function is as follows. Probable glucose transporter. This Saccharomyces cerevisiae (strain ATCC 204508 / S288c) (Baker's yeast) protein is Hexose transporter HXT14 (HXT14).